The sequence spans 511 residues: UDP-N-acetylmuramate--L-alanine ligase (511 aa).

Position 127–133 (127–133) interacts with ATP; it reads GTHGKTT. The tract at residues 481–511 is disordered; that stretch reads VGTVPGGEVGGATTIGGTVPGGSAPGASAAG. Gly residues predominate over residues 484 to 504; the sequence is VPGGEVGGATTIGGTVPGGSA.

It belongs to the MurCDEF family.

It localises to the cytoplasm. It carries out the reaction UDP-N-acetyl-alpha-D-muramate + L-alanine + ATP = UDP-N-acetyl-alpha-D-muramoyl-L-alanine + ADP + phosphate + H(+). It functions in the pathway cell wall biogenesis; peptidoglycan biosynthesis. Functionally, cell wall formation. In Salinispora arenicola (strain CNS-205), this protein is UDP-N-acetylmuramate--L-alanine ligase.